Here is a 150-residue protein sequence, read N- to C-terminus: Large ribosomal subunit protein uL11 (150 aa).

This sequence belongs to the universal ribosomal protein uL11 family. As to quaternary structure, part of the ribosomal stalk of the 50S ribosomal subunit. Interacts with L10 and the large rRNA to form the base of the stalk. L10 forms an elongated spine to which L12 dimers bind in a sequential fashion forming a multimeric L10(L12)X complex. One or more lysine residues are methylated.

Its function is as follows. Forms part of the ribosomal stalk which helps the ribosome interact with GTP-bound translation factors. The sequence is that of Large ribosomal subunit protein uL11 from Ureaplasma parvum serovar 3 (strain ATCC 27815 / 27 / NCTC 11736).